We begin with the raw amino-acid sequence, 85 residues long: Small ribosomal subunit protein uS17 (85 aa).

This sequence belongs to the universal ribosomal protein uS17 family. As to quaternary structure, part of the 30S ribosomal subunit.

In terms of biological role, one of the primary rRNA binding proteins, it binds specifically to the 5'-end of 16S ribosomal RNA. The polypeptide is Small ribosomal subunit protein uS17 (Citrifermentans bemidjiense (strain ATCC BAA-1014 / DSM 16622 / JCM 12645 / Bem) (Geobacter bemidjiensis)).